Reading from the N-terminus, the 235-residue chain is Class A basic helix-loop-helix protein 9 (235 aa).

2 disordered regions span residues 1–69 (MLRG…RRMA) and 132–235 (GHLE…HPRS). Residues 55–67 (RRRARPVRSKARR) show a composition bias toward basic residues. The bHLH domain occupies 65 to 117 (ARRMAANVRERKRILDYNEAFNALRRALRHDLGGKRLSKIATLRRAIHRIAAL).

Heterodimer. Efficient DNA binding requires dimerization with another bHLH protein. Interacts with TCF3, TCF4, and TCF12.

It localises to the nucleus. Its subcellular location is the cytoplasm. Transcription factor, which play a role in limb development. Is an essential player in the regulatory network governing transcription of genes implicated in limb morphogenesis. The polypeptide is Class A basic helix-loop-helix protein 9 (BHLHA9) (Homo sapiens (Human)).